The following is a 357-amino-acid chain: Putative DENN domain-containing protein 10 B (357 aa).

A uDENN domain is found at 1-140 (MAAAELADTQ…TKGICQSEEN (140 aa)). Residues 159–299 (IKDIVSQFGM…PEKSESQVIQ (141 aa)) enclose the cDENN domain. The region spanning 301–357 (IALKTREIFTNLAPFSEVSADGEKRVLNLEALKQKRFPPATENFLYHLAAAEQMLKI) is the dDENN domain.

The protein belongs to the DENND10 family.

The protein localises to the late endosome. May be a guanine nucleotide exchange factor (GEF). This Homo sapiens (Human) protein is Putative DENN domain-containing protein 10 B.